The sequence spans 259 residues: Hydroxyethylthiazole kinase 1 (259 aa).

Residue Met-38 coordinates substrate. ATP-binding residues include Arg-113 and Ser-158. Gly-185 contacts substrate.

The protein belongs to the Thz kinase family. Requires Mg(2+) as cofactor.

The enzyme catalyses 5-(2-hydroxyethyl)-4-methylthiazole + ATP = 4-methyl-5-(2-phosphooxyethyl)-thiazole + ADP + H(+). It participates in cofactor biosynthesis; thiamine diphosphate biosynthesis; 4-methyl-5-(2-phosphoethyl)-thiazole from 5-(2-hydroxyethyl)-4-methylthiazole: step 1/1. Its function is as follows. Catalyzes the phosphorylation of the hydroxyl group of 4-methyl-5-beta-hydroxyethylthiazole (THZ). The chain is Hydroxyethylthiazole kinase 1 from Leuconostoc mesenteroides subsp. mesenteroides (strain ATCC 8293 / DSM 20343 / BCRC 11652 / CCM 1803 / JCM 6124 / NCDO 523 / NBRC 100496 / NCIMB 8023 / NCTC 12954 / NRRL B-1118 / 37Y).